Consider the following 197-residue polypeptide: MAVVPIRIVGDPVLHTPTEPVPVGPDGSLPDDLPALIQDMFDTMDAANGVGLAANQIGVAKRLFVYDCAPTRGQTTRRRGVVINPVLETSEVPETMPDPDEDEEGCLSVPGENFPTGRADWARVTGLDADGSPITLEGEDLFARMLQHETGHLDGFLYLDRLVGRYARAAKKAVKRNGWGVPGLSWMPGEVPDPFGH.

Fe cation-binding residues include C106 and H148. E149 is a catalytic residue. Residue H152 participates in Fe cation binding.

It belongs to the polypeptide deformylase family. It depends on Fe(2+) as a cofactor.

The enzyme catalyses N-terminal N-formyl-L-methionyl-[peptide] + H2O = N-terminal L-methionyl-[peptide] + formate. In terms of biological role, removes the formyl group from the N-terminal Met of newly synthesized proteins. Requires at least a dipeptide for an efficient rate of reaction. N-terminal L-methionine is a prerequisite for activity but the enzyme has broad specificity at other positions. This Mycolicibacterium smegmatis (strain ATCC 700084 / mc(2)155) (Mycobacterium smegmatis) protein is Peptide deformylase.